We begin with the raw amino-acid sequence, 198 residues long: Cytochrome c oxidase assembly protein CtaG (198 aa).

The Cytoplasmic portion of the chain corresponds to 1–12; sequence MADTGQSDRKER. A helical; Signal-anchor for type II membrane protein membrane pass occupies residues 13-35; the sequence is SNGVIVGTCLAFVVGMVGMAYAA. Residues 36 to 198 are Periplasmic-facing; sequence VPLYDMFCRV…QVKSRTENKL (163 aa).

This sequence belongs to the COX11/CtaG family.

The protein resides in the cell inner membrane. In terms of biological role, exerts its effect at some terminal stage of cytochrome c oxidase synthesis, probably by being involved in the insertion of the copper B into subunit I. The protein is Cytochrome c oxidase assembly protein CtaG of Sinorhizobium medicae (strain WSM419) (Ensifer medicae).